A 228-amino-acid chain; its full sequence is Biopolymer transport protein exbB1 (228 aa).

The next 3 helical transmembrane spans lie at 11 to 31, 116 to 136, and 158 to 178; these read LGLM…LLAE, LTLI…LGLI, and LGVA…AVAG.

The protein belongs to the ExbB/TolQ family. The accessory proteins ExbB and ExbD seem to form a complex with TonB.

It is found in the cell inner membrane. Functionally, involved in the TonB-dependent energy-dependent transport of various receptor-bound substrates. Protects ExbD from proteolytic degradation and functionally stabilizes TonB. In Vibrio cholerae serotype O1 (strain ATCC 39315 / El Tor Inaba N16961), this protein is Biopolymer transport protein exbB1 (exbB1).